The sequence spans 82 residues: Small ribosomal subunit protein bS16 (82 aa).

Belongs to the bacterial ribosomal protein bS16 family.

In Enterobacter sp. (strain 638), this protein is Small ribosomal subunit protein bS16.